The primary structure comprises 588 residues: Disabled homolog 1 (588 aa).

A disordered region spans residues 1–26 (MSTETELQVAVKTSAKKDSRKKGQDR). Residues 15-26 (AKKDSRKKGQDR) are compositionally biased toward basic and acidic residues. The 154-residue stretch at 36–189 (KGEGVRYKAK…CEQAVYQTIL (154 aa)) folds into the PID domain. 3 positions are modified to phosphotyrosine: Tyr-198, Tyr-220, and Tyr-232. 4 disordered regions span residues 224-243 (TSQK…NSQP), 420-444 (LATV…QKMG), 451-470 (FQMV…PSLT), and 502-588 (LTPV…QDGS). Positions 424–436 (PGTNDSARSSPQS) are enriched in polar residues. Low complexity-rich tracts occupy residues 503–512 (TPVTSTTPST) and 523–534 (SSPSKSSASHVS). A Phosphoserine; by CDK5 modification is found at Ser-524. Acidic residues predominate over residues 537-546 (TADDIFEEGF).

Associates with the SH2 domains of SRC, FYN and ABL. Interacts (phosphorylated on tyrosine residues) with CRK and CRKL (via respective SH2 domain). Interacts with SIAH1, LRP8 and VLDLR. Interacts with LRP1. Interacts with APLP1 (via NPXY motif). Interacts with DAB2IP. Interacts with ZSWIM8. In terms of processing, phosphorylated by FYN on Tyr-198 and Tyr-220 upon reelin induction in embryonic neurons. Also found phosphorylated on Tyr-232 upon reelin induction. Also phosphorylated on Ser-524 independently of reelin signaling. Post-translationally, ubiquitinated by various cullin-5-RING E3 ubiquitin-protein ligase complexes (ECS complexes) following ligand-binding and phosphorylation, leading to its degradation. Ubiquitinated by the ECS(SOCS7) complex in the cortical plate of the developing cerebral cortex following ligand-binding and phosphorylation by FYN, leading to its degradation by the proteasome. Recognized by ZSWIM8 through a disorder targets misorder mechanism that eliminates misfolded DAB1 via ubiquitination and proteasomal degradation. As to expression, expressed mainly in brain. Specifically expressin in cortical neurons.

The protein resides in the cytoplasm. Signaling adapter of the reelin-mediated signaling pathway, which regulates the migration and differentiation of postmitotic neurons during brain development. Mediates intracellular transduction of Reelin signaling following reelin (RELN)-binding to its receptor: acts by docking proteins through its phosphotyrosine residues and PID domain. The polypeptide is Disabled homolog 1 (Mus musculus (Mouse)).